A 154-amino-acid chain; its full sequence is 6,7-dimethyl-8-ribityllumazine synthase (154 aa).

5-amino-6-(D-ribitylamino)uracil is bound by residues Phe23, 57 to 59 (AFE), and 81 to 83 (AVI). Position 86–87 (86–87 (ST)) interacts with (2S)-2-hydroxy-3-oxobutyl phosphate. His89 (proton donor) is an active-site residue. A 5-amino-6-(D-ribitylamino)uracil-binding site is contributed by Phe114. Arg128 provides a ligand contact to (2S)-2-hydroxy-3-oxobutyl phosphate.

The protein belongs to the DMRL synthase family.

The enzyme catalyses (2S)-2-hydroxy-3-oxobutyl phosphate + 5-amino-6-(D-ribitylamino)uracil = 6,7-dimethyl-8-(1-D-ribityl)lumazine + phosphate + 2 H2O + H(+). It participates in cofactor biosynthesis; riboflavin biosynthesis; riboflavin from 2-hydroxy-3-oxobutyl phosphate and 5-amino-6-(D-ribitylamino)uracil: step 1/2. Its function is as follows. Catalyzes the formation of 6,7-dimethyl-8-ribityllumazine by condensation of 5-amino-6-(D-ribitylamino)uracil with 3,4-dihydroxy-2-butanone 4-phosphate. This is the penultimate step in the biosynthesis of riboflavin. The protein is 6,7-dimethyl-8-ribityllumazine synthase of Campylobacter jejuni subsp. jejuni serotype O:2 (strain ATCC 700819 / NCTC 11168).